The chain runs to 640 residues: Threonine--tRNA ligase (640 aa).

In terms of domain architecture, TGS spans 1–61 (MPVVTLPDGS…DKDSHLAIIT (61 aa)). Residues 242–533 (DHRRLGKQLD…LIENHAGNMP (292 aa)) form a catalytic region. Positions 333, 384, and 510 each coordinate Zn(2+).

Belongs to the class-II aminoacyl-tRNA synthetase family. In terms of assembly, homodimer. It depends on Zn(2+) as a cofactor.

Its subcellular location is the cytoplasm. It catalyses the reaction tRNA(Thr) + L-threonine + ATP = L-threonyl-tRNA(Thr) + AMP + diphosphate + H(+). Catalyzes the attachment of threonine to tRNA(Thr) in a two-step reaction: L-threonine is first activated by ATP to form Thr-AMP and then transferred to the acceptor end of tRNA(Thr). Also edits incorrectly charged L-seryl-tRNA(Thr). The chain is Threonine--tRNA ligase from Polynucleobacter asymbioticus (strain DSM 18221 / CIP 109841 / QLW-P1DMWA-1) (Polynucleobacter necessarius subsp. asymbioticus).